A 294-amino-acid polypeptide reads, in one-letter code: F-box protein SKIP3 (294 aa).

The region spanning 21–67 (SSTLDSLPEGCISNIISFTSPEDACVAAAVSKIFESAVKSDIVWEKF) is the F-box domain.

As to quaternary structure, part of a SCF (SKP1-cullin-F-box) protein ligase complex. Interacts with SKP1A/ASK1.

It functions in the pathway protein modification; protein ubiquitination. The protein is F-box protein SKIP3 (SKIP3) of Arabidopsis thaliana (Mouse-ear cress).